A 249-amino-acid polypeptide reads, in one-letter code: Diaminopimelate epimerase (249 aa).

Substrate contacts are provided by N11 and N60. C69 acts as the Proton donor in catalysis. Substrate is bound by residues 70–71 (GN), N164, and 182–183 (ER). Residue C192 is the Proton acceptor of the active site. Residue 193-194 (GT) coordinates substrate.

Belongs to the diaminopimelate epimerase family. As to quaternary structure, homodimer.

Its subcellular location is the cytoplasm. The catalysed reaction is (2S,6S)-2,6-diaminopimelate = meso-2,6-diaminopimelate. The protein operates within amino-acid biosynthesis; L-lysine biosynthesis via DAP pathway; DL-2,6-diaminopimelate from LL-2,6-diaminopimelate: step 1/1. Functionally, catalyzes the stereoinversion of LL-2,6-diaminopimelate (L,L-DAP) to meso-diaminopimelate (meso-DAP), a precursor of L-lysine and an essential component of the bacterial peptidoglycan. The sequence is that of Diaminopimelate epimerase from Campylobacter jejuni subsp. jejuni serotype O:6 (strain 81116 / NCTC 11828).